A 141-amino-acid polypeptide reads, in one-letter code: Transcription antitermination protein NusB (141 aa).

The protein belongs to the NusB family.

In terms of biological role, involved in transcription antitermination. Required for transcription of ribosomal RNA (rRNA) genes. Binds specifically to the boxA antiterminator sequence of the ribosomal RNA (rrn) operons. The sequence is that of Transcription antitermination protein NusB from Neisseria meningitidis serogroup B (strain ATCC BAA-335 / MC58).